The following is a 360-amino-acid chain: Lipid-A-disaccharide synthase (360 aa).

The protein belongs to the LpxB family.

It catalyses the reaction a lipid X + a UDP-2-N,3-O-bis[(3R)-3-hydroxyacyl]-alpha-D-glucosamine = a lipid A disaccharide + UDP + H(+). It participates in bacterial outer membrane biogenesis; LPS lipid A biosynthesis. In terms of biological role, condensation of UDP-2,3-diacylglucosamine and 2,3-diacylglucosamine-1-phosphate to form lipid A disaccharide, a precursor of lipid A, a phosphorylated glycolipid that anchors the lipopolysaccharide to the outer membrane of the cell. The sequence is that of Lipid-A-disaccharide synthase from Helicobacter pylori (strain Shi470).